The chain runs to 232 residues: Large ribosomal subunit protein uL1 (232 aa).

This sequence belongs to the universal ribosomal protein uL1 family. Part of the 50S ribosomal subunit.

Its function is as follows. Binds directly to 23S rRNA. The L1 stalk is quite mobile in the ribosome, and is involved in E site tRNA release. Functionally, protein L1 is also a translational repressor protein, it controls the translation of the L11 operon by binding to its mRNA. This is Large ribosomal subunit protein uL1 from Bordetella petrii (strain ATCC BAA-461 / DSM 12804 / CCUG 43448).